A 173-amino-acid polypeptide reads, in one-letter code: uncharacterized protein (173 aa).

A helical transmembrane segment spans residues 1-21 (MFIVFYLILIIFIFIYFHVYI).

To T.pallidum TP0711.

The protein localises to the membrane. This is an uncharacterized protein from Borreliella burgdorferi (strain ATCC 35210 / DSM 4680 / CIP 102532 / B31) (Borrelia burgdorferi).